The chain runs to 179 residues: MFPMVTGFMNYGQQTVRAARYIGQSFMITLSHANRLPVTIQYPYEKLITSERFRGRIHFEFDKCIACEVCVRVCPIDLPVVDWRLDTDVRKKQLLNYSIDFGVCIFCGNCVEYCPTNCLSMTEEYELSTYDRHELNYNQIALGRLPMSVIEDYTIRTTTNLTPIKIAKNKPLGSRTITN.

4Fe-4S ferredoxin-type domains lie at 55 to 84 (GRIHFEFDKCIACEVCVRVCPIDLPVVDWR) and 95 to 124 (LNYSIDFGVCIFCGNCVEYCPTNCLSMTEE). 8 residues coordinate [4Fe-4S] cluster: Cys-64, Cys-67, Cys-70, Cys-74, Cys-104, Cys-107, Cys-110, and Cys-114.

It belongs to the complex I 23 kDa subunit family. As to quaternary structure, NDH is composed of at least 16 different subunits, 5 of which are encoded in the nucleus. It depends on [4Fe-4S] cluster as a cofactor.

It localises to the plastid. The protein localises to the chloroplast thylakoid membrane. It carries out the reaction a plastoquinone + NADH + (n+1) H(+)(in) = a plastoquinol + NAD(+) + n H(+)(out). It catalyses the reaction a plastoquinone + NADPH + (n+1) H(+)(in) = a plastoquinol + NADP(+) + n H(+)(out). Functionally, NDH shuttles electrons from NAD(P)H:plastoquinone, via FMN and iron-sulfur (Fe-S) centers, to quinones in the photosynthetic chain and possibly in a chloroplast respiratory chain. The immediate electron acceptor for the enzyme in this species is believed to be plastoquinone. Couples the redox reaction to proton translocation, and thus conserves the redox energy in a proton gradient. In Acorus calamus (Sweet flag), this protein is NAD(P)H-quinone oxidoreductase subunit I, chloroplastic.